We begin with the raw amino-acid sequence, 102 residues long: Small ribosomal subunit protein uS10 (102 aa).

Belongs to the universal ribosomal protein uS10 family. In terms of assembly, part of the 30S ribosomal subunit.

Functionally, involved in the binding of tRNA to the ribosomes. The protein is Small ribosomal subunit protein uS10 of Trichlorobacter lovleyi (strain ATCC BAA-1151 / DSM 17278 / SZ) (Geobacter lovleyi).